The chain runs to 612 residues: Zinc metalloproteinase-disintegrin-like HV1 (612 aa).

The signal sequence occupies residues 1 to 20 (MIQVLLVTICLAVFPYQGSS). A propeptide spanning residues 21–188 (IILESGNVND…SIKEDSQSNL (168 aa)) is cleaved from the precursor. A Peptidase M12B domain is found at 200-396 (KYVKFFLVAD…NMPQCILKKP (197 aa)). A glycan (N-linked (GlcNAc...) asparagine) is linked at Asn219. Intrachain disulfides connect Cys311-Cys391, Cys351-Cys375, and Cys353-Cys358. His336 is a Zn(2+) binding site. Glu337 is an active-site residue. Residues His340 and His346 each contribute to the Zn(2+) site. In terms of domain architecture, Disintegrin spans 404–489 (PPVCGNYFVE…AECTDRFQRN (86 aa)). Ca(2+)-binding residues include Val406, Asn409, Phe411, Glu413, Glu416, and Asp419. Disulfide bonds link Cys407–Cys436, Cys418–Cys431, Cys420–Cys426, Cys430–Cys453, Cys444–Cys450, Cys449–Cys475, Cys462–Cys482, Cys469–Cys500, Cys493–Cys505, Cys512–Cys562, Cys527–Cys573, Cys540–Cys550, Cys557–Cys599, and Cys593–Cys605. Positions 468–470 (ECD) match the D/ECD-tripeptide motif. Positions 470, 471, 473, 484, and 485 each coordinate Ca(2+). Asn502 is a glycosylation site (N-linked (GlcNAc...) asparagine). A glycan (N-linked (GlcNAc...) asparagine) is linked at Asn609.

Belongs to the venom metalloproteinase (M12B) family. P-III subfamily. P-IIIc sub-subfamily. Homodimer; disulfide-linked. Zn(2+) is required as a cofactor. As to expression, expressed by the venom gland.

The protein localises to the secreted. Inhibited by EDTA and EGTA. In terms of biological role, snake venom zinc metalloproteinase-disintegrin-like that potently activates prothrombin (F2). Does not elicit any hemorrhagic response. Barely inhibits collagen-induced platelet aggregation. Hydrolyzes the alpha-chain of fibrin and fibrinogen (FGA), without affecting the Bbeta- and gamma-chains. Induces apoptosis in cultured vascular endothelial cells. The sequence is that of Zinc metalloproteinase-disintegrin-like HV1 from Protobothrops flavoviridis (Habu).